Here is a 178-residue protein sequence, read N- to C-terminus: Translation initiation factor IF-3 (178 aa).

It belongs to the IF-3 family. In terms of assembly, monomer.

The protein resides in the cytoplasm. In terms of biological role, IF-3 binds to the 30S ribosomal subunit and shifts the equilibrium between 70S ribosomes and their 50S and 30S subunits in favor of the free subunits, thus enhancing the availability of 30S subunits on which protein synthesis initiation begins. The sequence is that of Translation initiation factor IF-3 from Nautilia profundicola (strain ATCC BAA-1463 / DSM 18972 / AmH).